The sequence spans 99 residues: Single insulin-like growth factor-binding domain protein-2 (99 aa).

The first 18 residues, 1–18 (MESLFIFAFGMMLSSASA), serve as a signal peptide directing secretion. Residues 19-98 (LSCIPCVPEE…GQEVGRCRKK (80 aa)) form the IGFBP N-terminal domain. Serine 20 carries O-linked (GalNAc...) serine glycosylation. Intrachain disulfides connect cysteine 21–cysteine 44, cysteine 24–cysteine 46, cysteine 29–cysteine 47, cysteine 35–cysteine 50, cysteine 58–cysteine 74, and cysteine 68–cysteine 95.

As to expression, expressed in hemocytes.

It localises to the secreted. Has a role in the innate immune system. The protein is Single insulin-like growth factor-binding domain protein-2 of Cupiennius salei (American wandering spider).